The chain runs to 601 residues: Zinc finger CCCH domain-containing protein 33 (601 aa).

ANK repeat units lie at residues 71–101 (ERRT…EAAR) and 106–138 (DGAT…SVDA). A compositionally biased stretch (low complexity) spans 167–180 (PAVSPSSSPKKSAS). Residues 167–203 (PAVSPSSSPKKSASPPSPPPPQEAKKEYPPDLTLPDL) are disordered. 2 consecutive C3H1-type zinc fingers follow at residues 252–280 (SYSC…HGVF) and 288–312 (QYRT…HKPD).

The protein is Zinc finger CCCH domain-containing protein 33 of Oryza sativa subsp. japonica (Rice).